The chain runs to 509 residues: Photosystem II CP47 reaction center protein (509 aa).

Helical transmembrane passes span 21–36 (AVHM…WAGS), 101–115 (IVFS…IWHW), 140–156 (GIHL…FGAF), 203–218 (IAAG…FHLS), 237–253 (VLSS…AFVV), and 458–473 (SFAL…HGSR).

It belongs to the PsbB/PsbC family. PsbB subfamily. PSII is composed of 1 copy each of membrane proteins PsbA, PsbB, PsbC, PsbD, PsbE, PsbF, PsbH, PsbI, PsbJ, PsbK, PsbL, PsbM, PsbT, PsbX, PsbY, PsbZ, Psb30/Ycf12, at least 3 peripheral proteins of the oxygen-evolving complex and a large number of cofactors. It forms dimeric complexes. Binds multiple chlorophylls. PSII binds additional chlorophylls, carotenoids and specific lipids. serves as cofactor.

The protein localises to the plastid. Its subcellular location is the chloroplast thylakoid membrane. One of the components of the core complex of photosystem II (PSII). It binds chlorophyll and helps catalyze the primary light-induced photochemical processes of PSII. PSII is a light-driven water:plastoquinone oxidoreductase, using light energy to abstract electrons from H(2)O, generating O(2) and a proton gradient subsequently used for ATP formation. In Populus deltoides (Eastern poplar), this protein is Photosystem II CP47 reaction center protein.